The chain runs to 274 residues: Urease accessory protein UreD 2 (274 aa).

The protein belongs to the UreD family. As to quaternary structure, ureD, UreF and UreG form a complex that acts as a GTP-hydrolysis-dependent molecular chaperone, activating the urease apoprotein by helping to assemble the nickel containing metallocenter of UreC. The UreE protein probably delivers the nickel.

The protein localises to the cytoplasm. In terms of biological role, required for maturation of urease via the functional incorporation of the urease nickel metallocenter. The polypeptide is Urease accessory protein UreD 2 (Brucella anthropi (strain ATCC 49188 / DSM 6882 / CCUG 24695 / JCM 21032 / LMG 3331 / NBRC 15819 / NCTC 12168 / Alc 37) (Ochrobactrum anthropi)).